We begin with the raw amino-acid sequence, 395 residues long: Probable sugar efflux transporter (395 aa).

12 helical membrane passes run Val13–Leu33, Val48–Leu68, Ile82–Leu102, Ile107–Leu127, Ala134–Leu154, Phe168–Val188, Pro207–Tyr227, Phe244–Ser264, Ala272–Leu292, Trp297–Met317, Val331–Gly351, and Ile363–Val383.

The protein belongs to the major facilitator superfamily. SotB (TC 2.A.1.2) family.

Its subcellular location is the cell inner membrane. Involved in the efflux of sugars. The physiological role may be the reduction of the intracellular concentration of toxic sugars or sugar metabolites. This chain is Probable sugar efflux transporter, found in Pectobacterium atrosepticum (strain SCRI 1043 / ATCC BAA-672) (Erwinia carotovora subsp. atroseptica).